A 927-amino-acid chain; its full sequence is Echinoderm microtubule-associated protein-like 4 (927 aa).

The tract at residues Met-1 to Asp-189 is microtubule-binding. Positions Ala-14 to Arg-63 form a coiled coil. Residues Asn-85 to Arg-132 form a disordered region. Positions Ser-116–Arg-132 are enriched in basic and acidic residues. WD repeat units lie at residues Leu-199–Tyr-237, Thr-241–Ser-288, Val-296–Trp-336, Ala-343–Trp-378, Arg-385–Lys-424, Gln-442–His-480, Glu-485–Thr-521, Asp-524–Ser-563, Ser-567–Ala-604, Val-610–Val-646, Tyr-653–Ile-692, Arg-702–Tyr-760, and Ala-767–Leu-806. A compositionally biased stretch (polar residues) spans Asn-815 to Val-829. The interval Asn-815–Ser-927 is disordered. Positions Ala-914–Ser-927 are enriched in acidic residues.

This sequence belongs to the WD repeat EMAP family. In terms of assembly, homotrimer; self-association is mediated by the N-terminal coiled coil.

It localises to the cytoplasm. Its subcellular location is the cytoskeleton. It is found in the spindle. The protein localises to the microtubule organizing center. The protein resides in the midbody. Functionally, essential for the formation and stability of microtubules (MTs). Required for the organization of the mitotic spindle and for the proper attachment of kinetochores to MTs. Promotes the recruitment of NUDC to the mitotic spindle for mitotic progression. This chain is Echinoderm microtubule-associated protein-like 4 (eml4), found in Xenopus laevis (African clawed frog).